The primary structure comprises 497 residues: Cytochrome P450 monooxygenase 151 (497 aa).

A helical membrane pass occupies residues 1-21 (MTDLVPVYYAFAGVVAALLFY). 2 N-linked (GlcNAc...) asparagine glycosylation sites follow: Asn-292 and Asn-397. Heme is bound at residue Cys-441.

The protein belongs to the cytochrome P450 family. The cofactor is heme.

The protein localises to the membrane. It functions in the pathway secondary metabolite biosynthesis. Its function is as follows. Cytochrome P450 monooxygenase that is able to use dehydroabietic acid and testosterone as substrates for oxidation, suggesting that the natural substrate(s) may be structurally related to steroid compounds. This chain is Cytochrome P450 monooxygenase 151, found in Postia placenta (strain ATCC 44394 / Madison 698-R) (Brown rot fungus).